Here is a 1616-residue protein sequence, read N- to C-terminus: MKSLLRKWNGMMIIALVISLLTPAWGKASAQSLGQESGGVQPQSAGVTDDVYVLSRDGTFRLPVGHINVNVDAPPQKTNYVALFTSGAQVTNSQETDKVFVKKTNTAIAVDKHDQVIRVIGPTAVPPTGSTWEENQNLPIPEGGYVLLANDSSWGTSVTRKPLFEHYKTGDTVSLHKGGQVVHAGDFLNPDPGLNLVTASGTTVTSPDFTVSGQVVRYGSGQGISLTVNGTEAALKADGAFQSAVRLTAGTNAISVKLLKDGREIVSSTVTVTYNDAQQPADLIEVEAAPIDITISIEGPAHAIGYVDQDIAGIDDTVALFTNDWGPQITVPQFNVAVQVDAGSKVTKVVNPSIDGKTPAWTGPTDLEIPSGGYVLVAQDTSYAGKNIKKYLATYFKVGDAIKLRKNGFAVPVKDLMGTGGPIARVTLDNYAMYTETKPSTELSGTITNMDDPSKIALTVNGTPLPFGPDGKFKTSYTLAEGINYLDLVVTKEGKEQDSKDLVVYSRPGFSTGKKVILWVDQAANARKFQTGDNVANFLRTAKENGVTSVVFDVKGVEGYVSYKKSTLTGRPYVSAIKAPEKAGSNPDLDLLQEFIRYSRELGLDIHVSFNIFAEGSIASNEFALLDSHLDWEERVYNAADNGQIKRLRESAKQGAVAFVNPSNDEVRDFQLKTIEEVLQNYDVDGVVLDRARYDNESADFSDLTKAKFESFLGARGKQLQNWPDDVFTYAGNVRKDGPLIRDWWEFRSKTIKSFTSEVRQLTDRVKAEKGKKIEVSAYVGSWFESYYLNGVHWGSTEFRYDERLRMKDKSVYTPGYYESGYVKNLDFIMIGAYQTTAPEIEHYITLGNIVTNGEVPLYAGIALTNVQEPALQRDVFQAGLVNTHGLMLFDASQVNWPVAGAALRNLVYVRDYQLGISLPDSPDSFLEGSYYNTNLIENNIGVLTDTFGYSTGNSRFGVEAVVDSSGKVTSVPNKTQAMTWNWGKPDETNSVIPKGGFVVSTLDASGIRTKRQLVANAYETGDSVRAAALSGFLAYEGLRTSADSVTFRGKVDVLGPGKASVTVNGQEAALREDGTFQADTVIRPGANPVVIIVRVDGFKTNEKTVTIIGDEAAVKALKLDRGTYSMNKGESLRLAVTAEYSSSSTDVTGQAAYASLDPAVVSVDATGRITALREGSGTVQATYEGHTATARVSVTSGSTGGGSDTGSGTGSGSGGGSAGGGGTAPSGPERTSVTETKDSDGRNLTLVSADAGVMEAEIAALQGKAAPVLSYEIPGEEPAGIVSLPGTALAKRFAGSPGAILSVSSHLGAIELPAGLLEADLPAVGSFDLLVQIGRTAADETADLRPGGERRHAGTRHAGCFPCFAENRRRNKRNRRLRKLRPKNRKLAGSGRPLTAPRRWSWTRPPECSASCPPASNRPGARRRPLSATEAGGPTRWSPPRSASPTLHPTGRARMSSCWPRSIVDGMGAGGFSPDEALTRAQFAALLTRALALDPAPAAADFTDIPGDAWYAGAVARRSGPARGRFRNRGVPTRRGADTRTDERDAHARREAGRYPDGGELRCRCAGALRGPGRNLRLGGRCRFAGGGSRPAGRTRGRTLRARPARLPVRKARPC.

An N-terminal signal peptide occupies residues 1 to 30 (MKSLLRKWNGMMIIALVISLLTPAWGKASA). Residues 1115–1185 (VKALKLDRGT…GSGTVQATYE (71 aa)) form the BIG2 domain. 4 disordered regions span residues 1191–1244 (ARVS…DGRN), 1372–1455 (NKRN…GRAR), 1523–1554 (ARGRFRNRGVPTRRGADTRTDERDAHARREAG), and 1585–1616 (FAGGGSRPAGRTRGRTLRARPARLPVRKARPC). Gly residues predominate over residues 1199–1225 (STGGGSDTGSGTGSGSGGGSAGGGGTA). The segment covering 1372-1387 (NKRNRRLRKLRPKNRK) has biased composition (basic residues). Residues 1406-1416 (PPECSASCPPA) are compositionally biased toward low complexity. Positions 1438–1502 (WSPPRSASPT…ALDPAPAAAD (65 aa)) constitute an SLH domain. A compositionally biased stretch (basic and acidic residues) spans 1536–1554 (RGADTRTDERDAHARREAG). Residues 1594-1616 (GRTRGRTLRARPARLPVRKARPC) are compositionally biased toward basic residues.

The protein localises to the secreted. Its subcellular location is the cell wall. The protein resides in the S-layer. In terms of biological role, the S-layer is a paracrystalline mono-layered assembly of proteins which coats the surface of bacteria. May play a role in the export of butirosin from the organism. The polypeptide is S-layer-related protein (butB) (Niallia circulans (Bacillus circulans)).